A 293-amino-acid polypeptide reads, in one-letter code: uncharacterized protein (293 aa).

This is an uncharacterized protein from Mycobacterium tuberculosis (strain CDC 1551 / Oshkosh).